A 108-amino-acid polypeptide reads, in one-letter code: Protein U4 (108 aa).

The chain crosses the membrane as a helical span at residues 5–25 (FLLFSLLFVVFLQPALVFNMV).

Belongs to the nanovirus U4 protein family.

The protein resides in the membrane. The sequence is that of Protein U4 (DNA-U4) from Astragalus sinicus (Chinese milk vetch).